Here is a 183-residue protein sequence, read N- to C-terminus: Ribosome-binding factor A (183 aa).

The interval 132–183 (PAGEADPYRDNGSVAQSPAPGGLGIRTSDGPEAVEAPLTCGGDTGDDDRPKE) is disordered.

It belongs to the RbfA family. Monomer. Binds 30S ribosomal subunits, but not 50S ribosomal subunits or 70S ribosomes.

It localises to the cytoplasm. One of several proteins that assist in the late maturation steps of the functional core of the 30S ribosomal subunit. Associates with free 30S ribosomal subunits (but not with 30S subunits that are part of 70S ribosomes or polysomes). Required for efficient processing of 16S rRNA. May interact with the 5'-terminal helix region of 16S rRNA. In Mycobacterium tuberculosis (strain ATCC 25177 / H37Ra), this protein is Ribosome-binding factor A.